The primary structure comprises 505 residues: ATP nucleosidase Cap17 (505 aa).

Residues 1 to 229 (MTNTNNEYVL…RLSEIAVELL (229 aa)) are cyclic oligonucleotide sensing-domain. The interval 239–505 (LHTPSVLILT…DYLQHGWIRA (267 aa)) is purine nucleoside phosphorylase domain.

This sequence belongs to the Cap17 family.

The catalysed reaction is ATP + H2O = D-ribose 5-triphosphate + adenine. It carries out the reaction dATP + H2O = 2-deoxyribose 5-triphosphate + adenine. Effector protein with (d)ATP degrading activity of a CBASS antivirus system. CBASS (cyclic oligonucleotide-based antiphage signaling system) provides immunity against bacteriophage. A CD-NTase protein synthesizes cyclic nucleotides in response to infection; these serve as specific second messenger signals. The signals activate a diverse range of effectors, leading to bacterial cell death and thus abortive phage infection. A type III CBASS system. Expression of this CBASS system (Cap18-Cap6-Cap7-CdnC-CapW-Cap17) in a susceptible E.coli (strain MG1655) confers resistance to bacteriophage P1, leading to cell lysis. By 50 minutes post-infection, ATP levels are markedly reduced while dATP has been eliminated. The C-terminal purine nucleoside phosphorylase (PNP) domain cleaves the N-glycosidic bond of (d)ATP to release adenine and a sugar triphosphate; has no activity on other (d)NTPs, nor on DNA or RNA. In vivo during phage infection has pleoitropic effects on nucleotide accumulation. This protein may be activated by the cognate CD-NTase (CdnC). The protein is ATP nucleosidase Cap17 of Escherichia coli (strain KTE188).